Here is a 730-residue protein sequence, read N- to C-terminus: Semaphorin-1A (730 aa).

A signal peptide spans Met-1 to Ala-20. Residues Trp-21 to Thr-630 lie on the Extracellular side of the membrane. A Sema domain is found at Lys-28–Leu-490. N-linked (GlcNAc...) asparagine glycosylation is found at Asn-44 and Asn-71. Disulfide bonds link Cys-97/Cys-107 and Cys-125/Cys-134. Residues Asn-163 and Asn-267 are each glycosylated (N-linked (GlcNAc...) asparagine). Cystine bridges form between Cys-244–Cys-358 and Cys-268–Cys-317. N-linked (GlcNAc...) asparagine glycosylation is present at Asn-360. Intrachain disulfides connect Cys-493-Cys-512 and Cys-504-Cys-521. The N-linked (GlcNAc...) asparagine glycan is linked to Asn-539. A helical membrane pass occupies residues Ile-631 to Phe-651. Over Ser-652–Ile-730 the chain is Cytoplasmic. A compositionally biased stretch (low complexity) spans Ala-708–Lys-720. Residues Ala-708–Ile-730 form a disordered region.

Belongs to the semaphorin family. Dynamically expressed on a subset of axon pathways in the developing CNS and on circumferential bands of epithelial cells in developing limb buds.

Its subcellular location is the membrane. Functionally, plays a role in growth cones guidance. The chain is Semaphorin-1A (SEMA-1A) from Schistocerca americana (American grasshopper).